Consider the following 315-residue polypeptide: Three-prime repair exonuclease 1 (315 aa).

Positions 18 and 20 each coordinate Mg(2+). 20-21 contributes to the substrate binding site; the sequence is EA. Ser78 carries the phosphoserine modification. Residue Tyr129 coordinates substrate. Ser167 is subject to Phosphoserine. Residue His195 is the Proton donor/acceptor of the active site. Asp200 lines the Mg(2+) pocket. Asp200 contributes to the substrate binding site. The interval 236–315 is necessary for endoplasmic reticulum localization; the sequence is TTSTGTNPRP…YGLSLAMPGQ (80 aa). An interaction with UBQLN1 region spans residues 243-315; the sequence is PRPSAVTATV…YGLSLAMPGQ (73 aa). Residues 256–282 form a disordered region; the sequence is RASDTGPNLRGDRSPKPAPSPKMCPGA. The span at 271–282 shows a compositional bias: pro residues; that stretch reads KPAPSPKMCPGA. The tract at residues 282-315 is necessary for cytoplasmic retention; sequence APPGEGLLAPLGLLAFLTLAVAMLYGLSLAMPGQ.

The protein belongs to the exonuclease superfamily. TREX family. As to quaternary structure, homodimer. Interacts (via proline-rich region) with TCERG1/CA150 (via the second WW domain). Component of the SET complex, composed of at least ANP32A, APEX1, HMGB2, NME1, SET and TREX1. Within this complex, directly interacts with SET; this interaction does not result in TREX1 inhibition. Also interacts with NME1, but only following translocation to the nucleus. Directly interacts with UBQLN1 (via ubiquitin-like domain); the interaction may control TREX1 subcellular location. Mg(2+) is required as a cofactor. In terms of processing, ubiquitinated, but not targeted to proteasomal degradation. Ubiquitination may be important for interaction with UBQLN1.

The protein localises to the nucleus. It is found in the cytoplasm. The protein resides in the cytosol. Its subcellular location is the endoplasmic reticulum membrane. The catalysed reaction is Exonucleolytic cleavage in the 3'- to 5'-direction to yield nucleoside 5'-phosphates.. Its function is as follows. Major cellular 3'-to-5' DNA exonuclease which digests single-stranded DNA (ssDNA) and double-stranded DNA (dsDNA) with mismatched 3' termini. Prevents cell-intrinsic initiation of autoimmunity. Acts by metabolizing DNA fragments from endogenous retroelements, including L1, LTR and SINE elements. Plays a key role in degradation of DNA fragments at cytosolic micronuclei arising from genome instability: its association with the endoplasmic reticulum membrane directs TREX1 to ruptured micronuclei, leading to micronuclear DNA degradation. Micronuclear DNA degradation is required to limit CGAS activation and subsequent inflammation. Unless degraded, these DNA fragments accumulate in the cytosol and activate the cGAS-STING innate immune signaling, leading to the production of type I interferon. Prevents chronic ATM-dependent checkpoint activation, by processing ssDNA polynucleotide species arising from the processing of aberrant DNA replication intermediates. Inefficiently degrades oxidized DNA, such as that generated upon antimicrobial reactive oxygen production or upon absorption of UV light. During GZMA-mediated cell death, contributes to DNA damage in concert with NME1. NME1 nicks one strand of DNA and TREX1 removes bases from the free 3' end to enhance DNA damage and prevent DNA end reannealing and rapid repair. This is Three-prime repair exonuclease 1 from Bos taurus (Bovine).